We begin with the raw amino-acid sequence, 450 residues long: Phosphoglucosamine mutase (450 aa).

Serine 101 acts as the Phosphoserine intermediate in catalysis. Residues serine 101, aspartate 243, aspartate 245, and aspartate 247 each coordinate Mg(2+). Serine 101 is subject to Phosphoserine.

The protein belongs to the phosphohexose mutase family. The cofactor is Mg(2+). Post-translationally, activated by phosphorylation.

The enzyme catalyses alpha-D-glucosamine 1-phosphate = D-glucosamine 6-phosphate. Catalyzes the conversion of glucosamine-6-phosphate to glucosamine-1-phosphate. This chain is Phosphoglucosamine mutase, found in Desulfotalea psychrophila (strain LSv54 / DSM 12343).